The following is a 107-amino-acid chain: Putative double-stranded DNA mimic protein ECA2319 (107 aa).

This sequence belongs to the putative dsDNA mimic protein family.

May act as a double-stranded DNA (dsDNA) mimic. Probably regulates the activity of a dsDNA-binding protein. This is Putative double-stranded DNA mimic protein ECA2319 from Pectobacterium atrosepticum (strain SCRI 1043 / ATCC BAA-672) (Erwinia carotovora subsp. atroseptica).